The chain runs to 131 residues: Large ribosomal subunit protein bL17 (131 aa).

It belongs to the bacterial ribosomal protein bL17 family. Part of the 50S ribosomal subunit. Contacts protein L32.

This chain is Large ribosomal subunit protein bL17, found in Thermotoga sp. (strain RQ2).